We begin with the raw amino-acid sequence, 184 residues long: Protein PPLZ12 (184 aa).

This is Protein PPLZ12 (PPLZ12) from Lupinus polyphyllus (Large-leaved lupine).